The chain runs to 902 residues: 26S proteasome regulatory subunit rpn-1 (902 aa).

Residues 1–41 are compositionally biased toward basic and acidic residues; the sequence is MAQESDLSKTADKGKGKAVDDEKKHQDVDGKTPANGKKEEE. The disordered stretch occupies residues 1 to 54; that stretch reads MAQESDLSKTADKGKGKAVDDEKKHQDVDGKTPANGKKEEEQNASEELSEEDQQ. Over residues 42 to 52 the composition is skewed to acidic residues; sequence QNASEELSEED. PC repeat units follow at residues 415 to 448, 449 to 487, 488 to 522, 525 to 559, 568 to 601, 645 to 680, 681 to 715, and 716 to 750; these read STVASLGTLLLWDVENGLDHVDKYTYLEEEQIQA, GAYLAIGIMNTNVRTDSEPAMALLADPDKLAHKNPLIRV, ATIMGLGLAYAGSCKEELLSFLVNIISDPEESMQV, MAALACGMIFVGSSNSEVSEAIVTTLLDEESGSRL, ALGLGLLYFGRQEQVDVILETLKAVEHPMAKPTA, AVLGIGLIAMGEDVGQEMVLRHFGHLMHYGEANIRR, AVPLAMGLISPSNPQMKVYDTLSRYSHDNDNEVAI, and NAIFAMGLLGAGTNNARLAQLLRQLASYYHRDQES.

Belongs to the proteasome subunit S2 family.

In terms of biological role, acts as a regulatory subunit of the 26 proteasome which is involved in the ATP-dependent degradation of ubiquitinated proteins. This chain is 26S proteasome regulatory subunit rpn-1 (rpn-1), found in Neurospora crassa (strain ATCC 24698 / 74-OR23-1A / CBS 708.71 / DSM 1257 / FGSC 987).